The primary structure comprises 450 residues: Bifunctional apoptosis regulator (450 aa).

Residues 1 to 20 (MEEPQKNDLSMREQEEEHPV) show a composition bias toward basic and acidic residues. A disordered region spans residues 1-25 (MEEPQKNDLSMREQEEEHPVRSSGP). Topologically, residues 1–140 (MEEPQKNDLS…PSTGRVNPQR (140 aa)) are cytoplasmic. The RING-type zinc-finger motif lies at 34–74 (CHCCYDTLVNPTTLNCGHSFCRHCLALWWMSSKKTECPECR). The chain crosses the membrane as a helical span at residues 141–161 (GGGFFSGVLTALTGVAVILLV). The Extracellular portion of the chain corresponds to 162–331 (YHWRSRESEH…REPTWKQWRE (170 aa)). The SAM domain occupies 182-249 (WTMEEVVLWL…LTELERVRAL (68 aa)). 2 N-linked (GlcNAc...) asparagine glycosylation sites follow: asparagine 232 and asparagine 308. The chain crosses the membrane as a helical span at residues 332 to 352 (FLVKYSFLPYQLIAEFAWDWL). Residues 353 to 360 (EVHYWTSR) are Cytoplasmic-facing. Residues 361 to 381 (FLIVNAVLLSVLELFSFWRIW) traverse the membrane as a helical segment. Over 382-404 (SRSELKTVPQRMWSHFWKVSTQG) the chain is Extracellular. The helical transmembrane segment at 405–425 (LFMAMFWPLIPQFVCNCLFYW) threads the bilayer. Over 426–450 (ALYFNPIINIDLVVKEVRRLETQVL) the chain is Cytoplasmic.

Interacts with CASP8, BCL2 and BCL2L1 through SAM domain and also with HIP1, IFT57, ESRRBL1 and BCAP31. Interacts with NGFR; this interaction inhibits NF-kappa-B and JNK-related signaling pathways. Mediates RING-dependent self-ubiquitination leading to proteasomal degradation.

It localises to the endoplasmic reticulum membrane. The catalysed reaction is S-ubiquitinyl-[E2 ubiquitin-conjugating enzyme]-L-cysteine + [acceptor protein]-L-lysine = [E2 ubiquitin-conjugating enzyme]-L-cysteine + N(6)-ubiquitinyl-[acceptor protein]-L-lysine.. Its function is as follows. Membrane-bound E3 ubiquitin ligase that plays a role in several processes including apoptosis regulation or reticulum endoplasmic stress. Has anti-apoptotic activity, both for apoptosis triggered via death-receptors and via mitochondrial factors. Contributes to the dynamic control of IRE1/ERN1 signaling during ER stress by inducing BAX inhibitor 1/TMBIM6 proteasomal degradation. Promotes the activation of TGF-beta signaling by mediating the 'Lys-63'-linked ubiquitination of TGFBR1 which is critical to activate the pathway. Together with NGFR, negatively regulates NF-kappa-B and JNK-related signaling pathways. Promotes the proteasome-mediated degradation of PNPLA3, a protein involveld in lipid metabolism. The sequence is that of Bifunctional apoptosis regulator (Bfar) from Mus musculus (Mouse).